Consider the following 206-residue polypeptide: Ras-related protein Rab-18 (206 aa).

Residue M1 is modified to N-acetylmethionine. Residues S17, G20, K21, S22, S23, D34, P35, T40, G66, K123, and D125 each contribute to the GTP site. Residue S22 coordinates Mg(2+). Short sequence motifs (switch) lie at residues 31 to 45 (DTFD…GVDF) and 63 to 80 (DTAG…YYRG). Mg(2+) is bound at residue T40. S144 bears the Phosphoserine mark. A152 contacts GTP. C199 carries the S-palmitoyl cysteine lipid modification. Cysteine methyl ester is present on C203. A lipid anchor (S-geranylgeranyl cysteine) is attached at C203. Residues 204–206 (SVL) constitute a propeptide, removed in mature form.

Belongs to the small GTPase superfamily. Rab family. Interacts (in GTP-bound form) with ZFYVE1. Interacts with ZW10 and this interaction is enhanced in the presence of ZFYVE1. Interacts with BSCL2. As to quaternary structure, (Microbial infection) Interacts with Hepatitis C virus (HCV) non-structural protein 5A; this interaction may promote the association of NS5A and other viral replicase components with lipid droplets. The cofactor is Mg(2+). As to expression, ubiquitous.

Its subcellular location is the endoplasmic reticulum membrane. The protein localises to the golgi apparatus. The protein resides in the cis-Golgi network membrane. It is found in the lipid droplet. It localises to the apical cell membrane. It carries out the reaction GTP + H2O = GDP + phosphate + H(+). Its activity is regulated as follows. Regulated by guanine nucleotide exchange factor (GEF) RAB3GAP1-RAB3GAP2 complex at the cis-Golgi membrane which promotes the exchange of bound GDP for free GTP. Regulated by GTPase activating protein (GAP) TBC1D20 at the ER membrane which increases the GTP hydrolysis activity. Inhibited by GDP dissociation inhibitors (GDIs) which prevent Rab-GDP dissociation. Functionally, the small GTPases Rab are key regulators of intracellular membrane trafficking, from the formation of transport vesicles to their fusion with membranes. Rabs cycle between an inactive GDP-bound form and an active GTP-bound form that is able to recruit to membranes different sets of downstream effectors directly responsible for vesicle formation, movement, tethering and fusion. RAB18 is required for the localization of ZFYVE1 to lipid droplets and for its function in mediating the formation of endoplasmic reticulum-lipid droplets (ER-LD) contacts. Also required for maintaining endoplasmic reticulum structure. Plays a role in apical endocytosis/recycling. Plays a key role in eye and brain development and neurodegeneration. In Homo sapiens (Human), this protein is Ras-related protein Rab-18.